The sequence spans 355 residues: Molybdenum import ATP-binding protein ModC (355 aa).

In terms of domain architecture, ABC transporter spans 1–233 (MTLIVEAKQR…PSTASDRREA (233 aa)). ATP is bound at residue 31–38 (GRSGSGKT). Residues 291-355 (GLSALNILEA…AIIKTVALEA (65 aa)) form the Mop domain.

Belongs to the ABC transporter superfamily. Molybdate importer (TC 3.A.1.8) family. As to quaternary structure, the complex is composed of two ATP-binding proteins (ModC), two transmembrane proteins (ModB) and a solute-binding protein (ModA).

The protein resides in the cell inner membrane. It catalyses the reaction molybdate(out) + ATP + H2O = molybdate(in) + ADP + phosphate + H(+). Its function is as follows. Part of the ABC transporter complex ModABC involved in molybdenum import. Responsible for energy coupling to the transport system. This chain is Molybdenum import ATP-binding protein ModC, found in Rhizobium johnstonii (strain DSM 114642 / LMG 32736 / 3841) (Rhizobium leguminosarum bv. viciae).